A 510-amino-acid chain; its full sequence is MDPHKKVALETEFFTEYGEASRYQIQEVIGKGSYGVVASAIDTHSGEKVAIKKINDVFEHVSDATRILREIKLLRLLRHPDIVEIKHVMLPPSRREFRDIYVVFELMESDLHQVIKANDDLTPEHYQFFLYQLLRGLKFIHTANVFHRDLKPKNILANSDCKLKICDFGLARVSFNDAPSAIFWTDYVATRWYRAPELCGSFFSKYTPAIDIWSIGCIFAEMLTGKPLFPGKNVVHQLDIMTDLLGTPPPEAIARIRNEKARRYLGNMRRKPPVPFTHKFPHVDPLALRLLHRLLAFDPKDRPSAEEALADPYFYGLANVDREPSTQPIPKLEFEFERRKITKEDVRELIYREILEYHPQMLQEYLRGGEQTSFMYPSGVDRFKRQFAHLEENYGKGEKGSPLQRQHASLPRERVPAPKKENGSHNHDIENRSIASLVTTLESPPTSQHEGSDYRNGTSQTGYSARSLLKSASISASKCIGMKPRNKSEYGESNNDTVDALSQKVAALHT.

The Protein kinase domain occupies 23–314 (YQIQEVIGKG…AEEALADPYF (292 aa)). ATP-binding positions include 29 to 37 (IGKGSYGVV) and Lys-52. Catalysis depends on Asp-149, which acts as the Proton acceptor. Thr-185 bears the Phosphothreonine mark. The short motif at 185–187 (TDY) is the TXY element. Tyr-187 bears the Phosphotyrosine mark. Residue Thr-190 is modified to Phosphothreonine. A disordered region spans residues 393–461 (NYGKGEKGSP…SDYRNGTSQT (69 aa)). Residues 410–431 (LPRERVPAPKKENGSHNHDIEN) show a composition bias toward basic and acidic residues. A compositionally biased stretch (polar residues) spans 433-461 (SIASLVTTLESPPTSQHEGSDYRNGTSQT).

The protein belongs to the protein kinase superfamily. CMGC Ser/Thr protein kinase family. MAP kinase subfamily. Post-translationally, dually phosphorylated on Thr-185 and Tyr-187, which activates the enzyme.

The catalysed reaction is L-seryl-[protein] + ATP = O-phospho-L-seryl-[protein] + ADP + H(+). It carries out the reaction L-threonyl-[protein] + ATP = O-phospho-L-threonyl-[protein] + ADP + H(+). Activated by threonine and tyrosine phosphorylation. This chain is Mitogen-activated protein kinase 9 (MPK9), found in Arabidopsis thaliana (Mouse-ear cress).